Consider the following 805-residue polypeptide: Transforming acidic coiled-coil-containing protein 1 (805 aa).

Ala2 is modified (N-acetylalanine). Residue Ala2 is the site of N-myristoyl glycine attachment. Positions 2–55 are interaction with LSM7 and SNRPG; it reads AFSPWQILSPVQWAKWTWSAVRGGAAGEDEAGGPEGDPEEEDSQAETKSLSFSS. 3 positions are modified to phosphoserine: Ser4, Ser10, and Ser44. A disordered region spans residues 23-140; that stretch reads RGGAAGEDEA…SVKNFREEPE (118 aa). A compositionally biased stretch (acidic residues) spans 28-45; sequence GEDEAGGPEGDPEEEDSQ. Composition is skewed to polar residues over residues 47–60 and 111–128; these read ETKSLSFSSDSEGN and SKTCSKPSENEVPQQAID. Over residues 130–140 the composition is skewed to basic and acidic residues; it reads HSVKNFREEPE. 2 positions are modified to phosphoserine: Ser147 and Ser153. Positions 152 to 259 are interaction with TDRD7; the sequence is FSIETKDSTD…TNAAVEGTPL (108 aa). The interaction with YEATS4 stretch occupies residues 206-427; it reads EASAEADLKA…DPDNFDESMD (222 aa). SPAZ domains lie at 215–297 and 359–507; these read AGNS…TPGT and SKSA…TDEE. A disordered region spans residues 215–457; sequence AGNSCPELVP…VNEILESPKK (243 aa). A Bipartite nuclear localization signal 1 motif is present at residues 226-241; that stretch reads RRSKLRKPKPVPLRKK. Over residues 226–242 the composition is skewed to basic residues; it reads RRSKLRKPKPVPLRKKA. Residue Ser228 is modified to Phosphoserine; by AURKC. Phosphoserine occurs at positions 248 and 276. Composition is skewed to polar residues over residues 296-305, 377-413, and 431-447; these read GTLSSDTNDS, LSQTSSKPDPSQWESPSFNPFGSHSVLQNSPPLSSEG, and PTTTLTSSDFCSPTGNH. 2 positions are modified to phosphoserine: Ser381 and Ser406. The Bipartite nuclear localization signal 2 signature appears at 455 to 471; it reads PKKAKSRLITSGCKVKK. Ser483 carries the phosphoserine modification. The interval 493–526 is disordered; that stretch reads ISDISNRDGHATDEEKLASTSCGQKSAGAEVKGE. The segment covering 497 to 509 has biased composition (basic and acidic residues); the sequence is SNRDGHATDEEKL. The residue at position 533 (Tyr533) is a Phosphotyrosine. At Ser591 the chain carries Phosphoserine. Positions 610–805 form a coiled coil; sequence IREEIITKEI…ELIAKLGKTD (196 aa). The segment at 701-805 is interaction with CH-TOG; sequence VLEGFKKNEE…ELIAKLGKTD (105 aa).

This sequence belongs to the TACC family. Interacts with KIAA0097/CH-TOG and with the oncogenic transcription factor YEATS4. Interacts with AURKA, AURKB and AURKC. Interacts with LSM7, TDRD7 and SNRPG. Interacts with GCN5L2 and PCAF. Interacts with the thyroid hormone receptors THRB and THRA, predominantly with isoform alpha-2. The interaction with THRA isoform alpha-1 and THRB is decreased in the presence of thyroid hormone T3. Also interacts with other nuclear receptors, including ESR1, NR3C1, PPARG, RARA and RXRA, preferentially in the absence of their hormonal ligands. Isoform 1 is heavily phosphorylated; isoform 6 is not. In terms of tissue distribution, isoform 1, isoform 3 and isoform 5 are ubiquitous. Isoform 2 is strongly expressed in the brain, weakly detectable in lung and colon, and overexpressed in gastric cancer. Isoform 4 is not detected in normal tissues, but strong expression was found in gastric cancer tissues. Down-regulated in a subset of cases of breast cancer.

Its subcellular location is the cytoplasm. The protein resides in the nucleus. It localises to the cytoskeleton. The protein localises to the microtubule organizing center. It is found in the centrosome. Its subcellular location is the midbody. The protein resides in the membrane. In terms of biological role, involved in transcription regulation induced by nuclear receptors, including in T3 thyroid hormone and all-trans retinoic acid pathways. Might promote the nuclear localization of the receptors. Likely involved in the processes that promote cell division prior to the formation of differentiated tissues. In Homo sapiens (Human), this protein is Transforming acidic coiled-coil-containing protein 1 (TACC1).